The chain runs to 246 residues: MGRRPCCEKIGLKKGPWSAEEDRILINYISLHGHPNWRALPKLAGLLRCGKSCRLRWINYLRPDIKRGNFTPHEEDTIISLHQLLGNRWSAIAAKLPGRTDNEIKNVWHTHLKKRLHHSQDQNNKEDFVSTTAAEMPTSPQQQSSSSADISAITTLGNNNDISNSNKDSATSSEDVLAIIDESFWSEVVLMDCDISGNEKNEKKIENWEGSLDRNDKGYNHDMEFWFDHLTSSSCIIGEMSDISEF.

2 HTH myb-type domains span residues lysine 9–leucine 61 and arginine 62–leucine 116. 2 consecutive DNA-binding regions (H-T-H motif) follow at residues tryptophan 37–leucine 61 and tryptophan 89–leucine 112.

As to expression, expressed in roots and flowers. Expressed in shoot apex, axillary buds, at the basis of flowers and branching points of inflorescences.

It localises to the nucleus. Its function is as follows. Plays a regulatory role in meristem function. Functions as component of a regulatory network controlling the establishment and/or development of the shoot system by the regulation of apical meristem function. May play a role in tolerance to boric acid. This Arabidopsis thaliana (Mouse-ear cress) protein is Transcription factor MYB13.